Reading from the N-terminus, the 898-residue chain is Chloride channel protein 2 (898 aa).

The Cytoplasmic portion of the chain corresponds to 1–90 (MAAPAAAAVE…RCHKFLVSRV (90 aa)). The interval 19–37 (QYEQTLMYGRYTQDLGAFA) is essential for channel gating by both voltage and cell volume. Residue Thr23 is modified to Phosphothreonine. The tract at residues 39-52 (EEAARIRLGGPEPW) is modulates channel gating by both voltage and cell volume. 2 helical membrane passes run 91–124 (GEDW…AQQW) and 133–158 (LLLQ…TQIL). Residues 164 to 168 (GSGIP) carry the Selectivity filter part_1 motif. The segment at residues 167-174 (IPEMKTIL) is an intramembrane region (helical). 2 helical membrane-spanning segments follow: residues 183–201 (LTLK…ALGS) and 208–226 (EGPF…SKFL). The short motif at 206–210 (GKEGP) is the Selectivity filter part_2 element. Intramembrane regions (helical) lie at residues 242–254 (MLAA…VGCC) and 258–266 (PIGGVLFSI). 5 helical membrane passes run 278 to 298 (YWRG…LAVW), 324 to 352 (LPAF…VQVM), 361 to 380 (FLMR…ISTL), 432 to 452 (ANVF…SALA), and 460 to 483 (GAFM…MAAW). The Selectivity filter part_3 motif lies at 460–464 (GAFMP). Positions 500 to 514 (GGYAVVGAAALAGAV) form an intramembrane region, helical. Residues 515–516 (TH) constitute an intramembrane region (note=Loop between two helices). Residues 517–528 (TVSTAVIVFELT) constitute an intramembrane region (helical). The segment at residues 529–533 (GQIAH) is an intramembrane region (note=Loop between two helices). Residues 534-551 (ILPVMIAVILANAVAQSL) traverse the membrane as a helical segment. Residues 552–898 (QPSLYDSIIR…SPSDSDDKCQ (347 aa)) lie on the Cytoplasmic side of the membrane. In terms of domain architecture, CBS 1 spans 587 to 645 (MVRDVPHVALSCTFRDLRLALHRTKGRTLALVESPESMILLGSIERTQVVALLAAQLSP). Residues 647–658 (RRRQSKQKRRVA) show a composition bias toward basic residues. A disordered region spans residues 647–675 (RRRQSKQKRRVAHTSPPSCQESPPSPETS). A Phosphoserine modification is found at Ser710. Positions 726–766 (FCGSPPPEAASESEKSESSEKRKSKRVRISLASDSDLEGEM) are disordered. Positions 737–746 (ESEKSESSEK) are enriched in basic and acidic residues. Ser758 is modified (phosphoserine). The CBS 2 domain occupies 790 to 850 (IDPAPFQLVE…GSVTAQGVKV (61 aa)). Positions 812–813 (LL) match the Basolateral membrane sorting motif. The tract at residues 856–898 (SFRDSATSSSDTETTEVHALWGPRSRHGLPREGSPSDSDDKCQ) is disordered.

It belongs to the chloride channel (TC 2.A.49) family. ClC-2/CLCN2 subfamily. In terms of assembly, homodimer. Interacts with auxiliary subunit HEPACAM. Phosphorylated. Activated by dephosphorylation. As to expression, ubiquitously expressed.

It is found in the cell membrane. The protein resides in the basolateral cell membrane. The protein localises to the cell projection. Its subcellular location is the dendritic spine membrane. It localises to the axon. The enzyme catalyses chloride(in) = chloride(out). The catalysed reaction is thiocyanate(in) = thiocyanate(out). It catalyses the reaction bromide(in) = bromide(out). It carries out the reaction nitrate(in) = nitrate(out). The enzyme catalyses iodide(out) = iodide(in). Common gate kinetics are down-regulated by intracellular ATP. Inhibited by AK-42, a derivative of meclofenamate. Inhibited by Cd(2+). Inhibited by Zn(2+) and PKC activation. Inhibited at acidic pH. CCLN2:HEPACAM channel conductance is up-regulated upon hypo-osmolarity. Functionally, voltage-gated and osmosensitive chloride channel. Forms a homodimeric channel where each subunit has its own ion conduction pathway. Conducts double-barreled currents controlled by two types of gates, two fast glutamate gates that control each subunit independently and a slow common gate that opens and shuts off both subunits simultaneously. Displays inward rectification currents activated upon membrane hyperpolarization and extracellular hypotonicity. Contributes to chloride conductance involved in neuron excitability. In hippocampal neurons, generates a significant part of resting membrane conductance and provides an additional chloride efflux pathway to prevent chloride accumulation in dendrites upon GABA receptor activation. In glia, associates with the auxiliary subunit HEPACAM/GlialCAM at astrocytic processes and myelinated fiber tracts where it may regulate transcellular chloride flux buffering extracellular chloride and potassium concentrations. Regulates aldosterone production in adrenal glands. The opening of CLCN2 channels at hyperpolarized membrane potentials in the glomerulosa causes cell membrane depolarization, activation of voltage-gated calcium channels and increased expression of aldosterone synthase, the rate-limiting enzyme for aldosterone biosynthesis. Contributes to chloride conductance in retinal pigment epithelium involved in phagocytosis of shed photoreceptor outer segments and photoreceptor renewal. Conducts chloride currents at the basolateral membrane of epithelial cells with a role in chloride reabsorption rather than secretion. Permeable to small monovalent anions with chloride &gt; thiocyanate &gt; bromide &gt; nitrate &gt; iodide ion selectivity. In Oryctolagus cuniculus (Rabbit), this protein is Chloride channel protein 2 (CLCN2).